A 377-amino-acid chain; its full sequence is Uroporphyrinogen decarboxylase (377 aa).

Substrate contacts are provided by residues 40-44, aspartate 89, tyrosine 169, serine 224, and histidine 354; that span reads RQAGR.

Belongs to the uroporphyrinogen decarboxylase family. In terms of assembly, homodimer.

The protein localises to the cytoplasm. The enzyme catalyses uroporphyrinogen III + 4 H(+) = coproporphyrinogen III + 4 CO2. The protein operates within porphyrin-containing compound metabolism; protoporphyrin-IX biosynthesis; coproporphyrinogen-III from 5-aminolevulinate: step 4/4. Catalyzes the decarboxylation of four acetate groups of uroporphyrinogen-III to yield coproporphyrinogen-III. In Leifsonia xyli subsp. xyli (strain CTCB07), this protein is Uroporphyrinogen decarboxylase.